A 95-amino-acid polypeptide reads, in one-letter code: Small ubiquitin-related modifier 4 (95 aa).

A Ubiquitin-like domain is found at 17-95; sequence HINLKVAGQD…VLQQQTGGVY (79 aa). G93 is covalently cross-linked (Glycyl lysine isopeptide (Gly-Lys) (interchain with K-? in acceptor proteins)). The propeptide occupies 94-95; it reads VY.

It belongs to the ubiquitin family. SUMO subfamily. As to quaternary structure, interacts with SAE2. Covalently attached to a number of proteins.

Ubiquitin-like protein which can be covalently attached to target lysines as a monomer. Does not seem to be involved in protein degradation and may modulate protein subcellular localization, stability or activity. Upon oxidative stress, conjugates to various anti-oxidant enzymes, chaperones, and stress defense proteins. May also conjugate to NFKBIA, TFAP2A and FOS, negatively regulating their transcriptional activity, and to NR3C1, positively regulating its transcriptional activity. Covalent attachment to its substrates requires prior activation by the E1 complex SAE1-SAE2 and linkage to the E2 enzyme UBE2I. This is Small ubiquitin-related modifier 4 (SUMO4) from Sus scrofa (Pig).